The chain runs to 226 residues: 26S proteasome non-ATPase regulatory subunit 10 (226 aa).

Positions 1–37 (MEGCVSNLMVCNLAYSGKLEELKESILADKSLATRTD) are required for nuclear localization. Positions 1 to 71 (MEGCVSNLMV…LGVPVNDKDD (71 aa)) are interaction with RB1. ANK repeat units lie at residues 3–36 (GCVS…ATRT), 37–69 (DQDS…VNDK), 70–102 (DDAG…VNAV), 103–135 (NQNG…PDAK), 136–168 (DHYE…TNIQ), 169–201 (DTEG…IYIE), and 202–226 (NKEE…MVEG). The segment at 39 to 226 (DSRTALHWAC…GLILKRMVEG (188 aa)) is interaction with RELA. The interaction with RB1 stretch occupies residues 171-226 (EGNTPLHLACDEERVEEAKLLVSQGASIYIENKEEKTPLQVAKGGLGLILKRMVEG).

Part of transient complex containing PSMD10, PSMC4, PSMC5 and PAAF1 formed during the assembly of the 26S proteasome. Stays associated throughout the assembly of the PA700/19S RC and is released upon association with the 20S core. Interacts with PSMC4. Interacts with RB1. Interacts with CDK4. Interacts with MDM2. Interacts with RELA. Associates with a CDK4:CCND2 serine/threonine kinase complex. Interacts with ARHGDIA and increases the interaction between ARHGDIA and RHOA, hence promotes ARHGDIA inactivation of RHOA and ROCK. In terms of tissue distribution, tends to be up-regulated in cancer cells with RAS mutations, including lung cancers and adenocarconimas (at protein level).

Its subcellular location is the cytoplasm. It is found in the nucleus. Acts as a chaperone during the assembly of the 26S proteasome, specifically of the PA700/19S regulatory complex (RC). In the initial step of the base subcomplex assembly is part of an intermediate PSMD10:PSMC4:PSMC5:PAAF1 module which probably assembles with a PSMD5:PSMC2:PSMC1:PSMD2 module. Independently of the proteasome, regulates EGF-induced AKT activation through inhibition of the RHOA/ROCK/PTEN pathway, leading to prolonged AKT activation. Plays an important role in RAS-induced tumorigenesis. Its function is as follows. Acts as an proto-oncoprotein by being involved in negative regulation of tumor suppressors RB1 and p53/TP53. Overexpression is leading to phosphorylation of RB1 and proteasomal degradation of RB1. Regulates CDK4-mediated phosphorylation of RB1 by competing with CDKN2A for binding with CDK4. Facilitates binding of MDM2 to p53/TP53 and the mono- and polyubiquitination of p53/TP53 by MDM2 suggesting a function in targeting the TP53:MDM2 complex to the 26S proteasome. Involved in p53-independent apoptosis. Involved in regulation of NF-kappa-B by retaining it in the cytoplasm. Binds to the NF-kappa-B component RELA and accelerates its XPO1/CRM1-mediated nuclear export. This Homo sapiens (Human) protein is 26S proteasome non-ATPase regulatory subunit 10 (PSMD10).